Consider the following 358-residue polypeptide: tRNA-specific 2-thiouridylase MnmA 2 (358 aa).

Residues 11–18 (GMSGGVDS) and methionine 37 each bind ATP. Catalysis depends on cysteine 106, which acts as the Nucleophile. Cysteine 106 and cysteine 202 are disulfide-bonded. An ATP-binding site is contributed by glycine 130. The tract at residues 152-154 (KDQ) is interaction with tRNA. Catalysis depends on cysteine 202, which acts as the Cysteine persulfide intermediate. The interaction with tRNA stretch occupies residues 308–309 (RY).

It belongs to the MnmA/TRMU family.

It localises to the cytoplasm. The enzyme catalyses S-sulfanyl-L-cysteinyl-[protein] + uridine(34) in tRNA + AH2 + ATP = 2-thiouridine(34) in tRNA + L-cysteinyl-[protein] + A + AMP + diphosphate + H(+). Catalyzes the 2-thiolation of uridine at the wobble position (U34) of tRNA, leading to the formation of s(2)U34. The chain is tRNA-specific 2-thiouridylase MnmA 2 from Clostridium tetani (strain Massachusetts / E88).